Here is a 369-residue protein sequence, read N- to C-terminus: UDP-3-O-acylglucosamine N-acyltransferase (369 aa).

The active-site Proton acceptor is the histidine 263.

This sequence belongs to the transferase hexapeptide repeat family. LpxD subfamily. In terms of assembly, homotrimer.

It carries out the reaction a UDP-3-O-[(3R)-3-hydroxyacyl]-alpha-D-glucosamine + a (3R)-hydroxyacyl-[ACP] = a UDP-2-N,3-O-bis[(3R)-3-hydroxyacyl]-alpha-D-glucosamine + holo-[ACP] + H(+). Its pathway is bacterial outer membrane biogenesis; LPS lipid A biosynthesis. In terms of biological role, catalyzes the N-acylation of UDP-3-O-acylglucosamine using 3-hydroxyacyl-ACP as the acyl donor. Is involved in the biosynthesis of lipid A, a phosphorylated glycolipid that anchors the lipopolysaccharide to the outer membrane of the cell. The sequence is that of UDP-3-O-acylglucosamine N-acyltransferase from Burkholderia ambifaria (strain MC40-6).